We begin with the raw amino-acid sequence, 201 residues long: Potassium-transporting ATPase KdpC subunit (201 aa).

The chain crosses the membrane as a helical span at residues 10 to 30 (VVLVVLTVICGLAYPLAMTGI). The interval 67–105 (HGRPSATSAADPADPTKTVSSPYNAANSSGSNLGPTSKA) is disordered. Over residues 70–82 (PSATSAADPADPT) the composition is skewed to low complexity. Positions 83 to 105 (KTVSSPYNAANSSGSNLGPTSKA) are enriched in polar residues.

The protein belongs to the KdpC family. In terms of assembly, the system is composed of three essential subunits: KdpA, KdpB and KdpC.

Its subcellular location is the cell inner membrane. In terms of biological role, part of the high-affinity ATP-driven potassium transport (or Kdp) system, which catalyzes the hydrolysis of ATP coupled with the electrogenic transport of potassium into the cytoplasm. This subunit acts as a catalytic chaperone that increases the ATP-binding affinity of the ATP-hydrolyzing subunit KdpB by the formation of a transient KdpB/KdpC/ATP ternary complex. The chain is Potassium-transporting ATPase KdpC subunit from Rhodopseudomonas palustris (strain BisB5).